We begin with the raw amino-acid sequence, 204 residues long: ATP-dependent Clp protease proteolytic subunit (204 aa).

Ser-101 (nucleophile) is an active-site residue. The active site involves His-126.

The protein belongs to the peptidase S14 family. Fourteen ClpP subunits assemble into 2 heptameric rings which stack back to back to give a disk-like structure with a central cavity, resembling the structure of eukaryotic proteasomes.

Its subcellular location is the cytoplasm. The enzyme catalyses Hydrolysis of proteins to small peptides in the presence of ATP and magnesium. alpha-casein is the usual test substrate. In the absence of ATP, only oligopeptides shorter than five residues are hydrolyzed (such as succinyl-Leu-Tyr-|-NHMec, and Leu-Tyr-Leu-|-Tyr-Trp, in which cleavage of the -Tyr-|-Leu- and -Tyr-|-Trp bonds also occurs).. Cleaves peptides in various proteins in a process that requires ATP hydrolysis. Has a chymotrypsin-like activity. Plays a major role in the degradation of misfolded proteins. The protein is ATP-dependent Clp protease proteolytic subunit of Deinococcus radiodurans (strain ATCC 13939 / DSM 20539 / JCM 16871 / CCUG 27074 / LMG 4051 / NBRC 15346 / NCIMB 9279 / VKM B-1422 / R1).